Here is a 382-residue protein sequence, read N- to C-terminus: Mannitol-1-phosphate 5-dehydrogenase (382 aa).

3-14 (ALHFGAGNIGRG) provides a ligand contact to NAD(+). At Lys-269 the chain carries N6-acetyllysine.

This sequence belongs to the mannitol dehydrogenase family.

The catalysed reaction is D-mannitol 1-phosphate + NAD(+) = beta-D-fructose 6-phosphate + NADH + H(+). The chain is Mannitol-1-phosphate 5-dehydrogenase from Escherichia coli (strain ATCC 8739 / DSM 1576 / NBRC 3972 / NCIMB 8545 / WDCM 00012 / Crooks).